The primary structure comprises 248 residues: Putative mutator protein MutT4 (248 aa).

Residues 1–64 (MSDGEQAKSR…GSTRMRTVHE (64 aa)) are disordered. Positions 9–20 (SRRRRGRRRGRR) are enriched in basic residues. Residues 31–44 (AQPAGDATPTPATA) are compositionally biased toward low complexity. Residues 45–57 (KRSRSRSPRRGST) are compositionally biased toward basic residues. Positions 62–198 (VHETSAGGLV…DERRLAEVAD (137 aa)) constitute a Nudix hydrolase domain. Mg(2+)-binding residues include Gly-103, Glu-118, Glu-121, and Glu-122. Positions 103–124 (GHIELGETAEQTAIREVAEETG) match the Nudix box motif. The tract at residues 204–248 (LQSDGPAALPPLPPSSPRRRPQTHSRARHADDSAPGQHNGPGPGP) is disordered. Residues 220-230 (PRRRPQTHSRA) show a composition bias toward basic residues.

Belongs to the Nudix hydrolase family. Requires Mg(2+) as cofactor. Mn(2+) serves as cofactor.

Functionally, may be involved in the GO system responsible for removing an oxidatively damaged form of guanine (7,8-dihydro-8-oxoguanine, 8-oxo-dGTP) from DNA and the nucleotide pool. The polypeptide is Putative mutator protein MutT4 (mutT4) (Mycobacterium tuberculosis (strain CDC 1551 / Oshkosh)).